A 199-amino-acid polypeptide reads, in one-letter code: Guanylate kinase (199 aa).

The Guanylate kinase-like domain maps to 20-198 (GKLIILTGPS…ALQAIEVALF (179 aa)). Position 27–34 (27–34 (GPSGVGKG)) interacts with ATP.

Belongs to the guanylate kinase family.

It localises to the cytoplasm. The enzyme catalyses GMP + ATP = GDP + ADP. Functionally, essential for recycling GMP and indirectly, cGMP. The sequence is that of Guanylate kinase from Nostoc sp. (strain PCC 7120 / SAG 25.82 / UTEX 2576).